Reading from the N-terminus, the 391-residue chain is ATP-sensitive inward rectifier potassium channel 1 (391 aa).

Topologically, residues 1 to 77 (MNASSRNVFD…IWTTVLDLKW (77 aa)) are cytoplasmic. Position 44 is a phosphoserine; by SGK1 (Ser44). A helical transmembrane segment spans residues 78 to 102 (RYKMTIFITAFLGSWFFFGLLWYAV). The Extracellular portion of the chain corresponds to 103–127 (AYIHKDLPEFHPSANHTPCVENING). N-linked (GlcNAc...) asparagine glycosylation is present at Asn117. An intramembrane region (helical; Pore-forming) is located at residues 128–139 (LTSAFLFSLETQ). The pore-forming intramembrane region spans 140–146 (VTIGYGF). The Selectivity filter signature appears at 141 to 146 (TIGYGF). Residues 147–155 (RCVTEQCAT) lie on the Extracellular side of the membrane. Residues 156–177 (AIFLLIFQSILGVIINSFMCGA) traverse the membrane as a helical segment. At 178 to 391 (ILAKISRPKK…EVNETDDTKM (214 aa)) the chain is on the cytoplasmic side. A polyphosphoinositide (PIP2)-binding region spans residues 180-207 (AKISRPKKRAKTITFSKNAVISKRGGKL). 223-230 (GSHIYGKL) lines the ATP pocket.

This sequence belongs to the inward rectifier-type potassium channel (TC 1.A.2.1) family. KCNJ1 subfamily. As to quaternary structure, interacts with SGK1 and SLC9A3R2/NHERF2. In terms of processing, phosphorylation at Ser-44 by SGK1 is necessary for its expression at the cell membrane. As to expression, in the kidney and pancreatic islets. Lower levels in skeletal muscle, pancreas, spleen, brain, heart and liver.

It localises to the cell membrane. It carries out the reaction K(+)(in) = K(+)(out). With respect to regulation, inhibited by WNK3. Activated by phosphatidylinositol 4,5 biphosphate (PtdIns(4,5)P2). Its function is as follows. Inward rectifier potassium channels are characterized by a greater tendency to allow potassium to flow into the cell rather than out of it. Their voltage dependence is regulated by the concentration of extracellular potassium; as external potassium is raised, the voltage range of the channel opening shifts to more positive voltages. The inward rectification is mainly due to the blockage of outward current by internal magnesium. This channel is activated by internal ATP and can be blocked by external barium. In the kidney, probably plays a major role in potassium homeostasis. This Homo sapiens (Human) protein is ATP-sensitive inward rectifier potassium channel 1 (KCNJ1).